The primary structure comprises 373 residues: Spermidine/putrescine import ATP-binding protein PotA (373 aa).

In terms of domain architecture, ABC transporter spans 6 to 236 (LSLSNLTKQF…PANLFTARFV (231 aa)). Position 38–45 (38–45 (GPSGCGKT)) interacts with ATP.

Belongs to the ABC transporter superfamily. Spermidine/putrescine importer (TC 3.A.1.11.1) family. In terms of assembly, the complex is composed of two ATP-binding proteins (PotA), two transmembrane proteins (PotB and PotC) and a solute-binding protein (PotD).

The protein resides in the cell inner membrane. It carries out the reaction ATP + H2O + polyamine-[polyamine-binding protein]Side 1 = ADP + phosphate + polyamineSide 2 + [polyamine-binding protein]Side 1.. Functionally, part of the ABC transporter complex PotABCD involved in spermidine/putrescine import. Responsible for energy coupling to the transport system. This is Spermidine/putrescine import ATP-binding protein PotA from Marinobacter nauticus (strain ATCC 700491 / DSM 11845 / VT8) (Marinobacter aquaeolei).